The primary structure comprises 158 residues: Style cell-cycle inhibitor 1-B (158 aa).

2 stretches are compositionally biased toward basic and acidic residues: residues 1–11 (MGSDKKTTEEK) and 22–47 (PRDE…DKSK). Residues 1-88 (MGSDKKTTEE…DKSKNKFEEL (88 aa)) form a disordered region. 2 stretches are compositionally biased toward basic residues: residues 48–58 (KEKHKSHKSKC) and 67–81 (GEKH…KDKS).

Specifically expressed in flowers pistils, especially in stigmas and styles. Barely detected in roots, stems, leaves, sepals, petals and stamen.

Its subcellular location is the nucleus. Functionally, component of the auxin signaling transduction pathway that regulates cell proliferation and differentiation during flowers stigmas and styles development. Involved in the regulation of auxin-related genes. This is Style cell-cycle inhibitor 1-B from Nicotiana tabacum (Common tobacco).